Consider the following 109-residue polypeptide: Larval cuticle protein 1 (109 aa).

A signal peptide spans 1–14 (MILVALALVALAVA). The Chitin-binding type R&amp;R domain maps to 34–107 (EGSYQFGFET…AEGSSIPKPA (74 aa)).

Its function is as follows. Component of the cuticle of the larva of Helicoverpa armigera. This is Larval cuticle protein 1 (LCP1) from Helicoverpa armigera (Cotton bollworm).